Reading from the N-terminus, the 315-residue chain is Acetyl-coenzyme A carboxylase carboxyl transferase subunit alpha (315 aa).

One can recognise a CoA carboxyltransferase C-terminal domain in the interval 32–289 (EIDMLEASLE…KEAFTKQLSE (258 aa)).

It belongs to the AccA family. In terms of assembly, acetyl-CoA carboxylase is a heterohexamer composed of biotin carboxyl carrier protein (AccB), biotin carboxylase (AccC) and two subunits each of ACCase subunit alpha (AccA) and ACCase subunit beta (AccD).

It localises to the cytoplasm. The enzyme catalyses N(6)-carboxybiotinyl-L-lysyl-[protein] + acetyl-CoA = N(6)-biotinyl-L-lysyl-[protein] + malonyl-CoA. The protein operates within lipid metabolism; malonyl-CoA biosynthesis; malonyl-CoA from acetyl-CoA: step 1/1. Component of the acetyl coenzyme A carboxylase (ACC) complex. First, biotin carboxylase catalyzes the carboxylation of biotin on its carrier protein (BCCP) and then the CO(2) group is transferred by the carboxyltransferase to acetyl-CoA to form malonyl-CoA. The chain is Acetyl-coenzyme A carboxylase carboxyl transferase subunit alpha from Staphylococcus carnosus (strain TM300).